A 338-amino-acid polypeptide reads, in one-letter code: Erlin-2 (338 aa).

The Cytoplasmic portion of the chain corresponds to 1–3; sequence MAQ. The chain crosses the membrane as a helical span at residues 4 to 24; it reads LGAVVAVAASFFCASLFSAVH. Over 25-338 the chain is Lumenal; it reads KIEEGHIGVY…DEPMEADSEN (314 aa). Residue asparagine 106 is glycosylated (N-linked (GlcNAc...) asparagine). The tract at residues 177 to 309 is interaction with ERLIN1; that stretch reads EAIRRNYELM…DIPNMFMDSA (133 aa). N6-acetyllysine is present on lysine 267.

This sequence belongs to the band 7/mec-2 family. In terms of assembly, forms a heteromeric complex with ERLIN1. In complex with ERLIN1, interacts with RNF170. Interacts with activated ITPR1, independently of the degree of ITPR1 polyubiquitination. Interacts with SCAP, INSIG1, SREBF1 and SREBF2 under cholesterol sufficiency conditions; indicative for an association with the SCAP-SREBP-INSIG complex. Probably part of an AMFR/gp78 and INSIG1-containing ubiquitin ligase complex involved in ERAD of HMGCR. Interacts with TMUB1; TMUB1 bridges the association with AMFR. Interacts with SYVN1 and RNF139. Interacts with TMEM259. Interacts with TMEM41B. Deubiquitinated by USP25; leading to stabilization.

The protein localises to the endoplasmic reticulum membrane. Component of the ERLIN1/ERLIN2 complex which mediates the endoplasmic reticulum-associated degradation (ERAD) of inositol 1,4,5-trisphosphate receptors (IP3Rs) such as ITPR1. Promotes sterol-accelerated ERAD of HMGCR probably implicating an AMFR/gp78-containing ubiquitin ligase complex. Involved in regulation of cellular cholesterol homeostasis by regulation the SREBP signaling pathway. May promote ER retention of the SCAP-SREBF complex. In Bos taurus (Bovine), this protein is Erlin-2 (ERLIN2).